The chain runs to 390 residues: Stearoyl-[acyl-carrier-protein] 9-desaturase 5, chloroplastic (390 aa).

Positions 1–22 (MAFAASHTASPSSCGGVAQRRS) are disordered. A chloroplast-targeting transit peptide spans 1-31 (MAFAASHTASPSSCGGVAQRRSNGMSPVVAM). Glu-132, Glu-170, His-173, Glu-223, Glu-256, and His-259 together coordinate Fe cation.

The protein belongs to the fatty acid desaturase type 2 family. Homodimer. The cofactor is Fe(2+).

It localises to the plastid. The protein localises to the chloroplast. It catalyses the reaction octadecanoyl-[ACP] + 2 reduced [2Fe-2S]-[ferredoxin] + O2 + 2 H(+) = (9Z)-octadecenoyl-[ACP] + 2 oxidized [2Fe-2S]-[ferredoxin] + 2 H2O. Its pathway is lipid metabolism; fatty acid metabolism. Functionally, converts stearoyl-ACP to oleoyl-ACP by introduction of a cis double bond between carbons 9 and 10 of the acyl chain. This is Stearoyl-[acyl-carrier-protein] 9-desaturase 5, chloroplastic from Oryza sativa subsp. japonica (Rice).